A 233-amino-acid chain; its full sequence is Membrane steroid-binding protein 2 (233 aa).

Residues 23-43 traverse the membrane as a helical segment; sequence AFFTVLALAFAVYQVVSGFFV. Residues 70–167 enclose the Cytochrome b5 heme-binding domain; that stretch reads EITEEELKLY…SKYVKVGTIQ (98 aa). A steroid-binding region spans residues 70–167; sequence EITEEELKLY…SKYVKVGTIQ (98 aa). 2 stretches are compositionally biased toward basic and acidic residues: residues 169–181 and 202–224; these read KDGE…EPSE and THDE…KDVA. The interval 169 to 233 is disordered; that stretch reads KDGEGKESSE…ATDDDDAAKE (65 aa). A Phosphothreonine modification is found at threonine 225.

The protein belongs to the cytochrome b5 family. MAPR subfamily.

The protein resides in the cell membrane. The polypeptide is Membrane steroid-binding protein 2 (MSBP2) (Arabidopsis thaliana (Mouse-ear cress)).